The following is a 132-amino-acid chain: Small ribosomal subunit protein uS8 (132 aa).

This sequence belongs to the universal ribosomal protein uS8 family. Part of the 30S ribosomal subunit. Contacts proteins S5 and S12.

Functionally, one of the primary rRNA binding proteins, it binds directly to 16S rRNA central domain where it helps coordinate assembly of the platform of the 30S subunit. The chain is Small ribosomal subunit protein uS8 from Rhodospirillum centenum (strain ATCC 51521 / SW).